The following is a 360-amino-acid chain: Membrane-bound lytic murein transglycosylase C (360 aa).

The N-terminal stretch at 1–16 (MKKYLALALIAPLLVS) is a signal peptide. The N-palmitoyl cysteine moiety is linked to residue Cys-17. Residue Cys-17 is the site of S-diacylglycerol cysteine attachment.

It belongs to the transglycosylase Slt family.

The protein localises to the cell outer membrane. It catalyses the reaction Exolytic cleavage of the (1-&gt;4)-beta-glycosidic linkage between N-acetylmuramic acid (MurNAc) and N-acetylglucosamine (GlcNAc) residues in peptidoglycan, from either the reducing or the non-reducing ends of the peptidoglycan chains, with concomitant formation of a 1,6-anhydrobond in the MurNAc residue.. In terms of biological role, murein-degrading enzyme. May play a role in recycling of muropeptides during cell elongation and/or cell division. The polypeptide is Membrane-bound lytic murein transglycosylase C (Klebsiella pneumoniae (strain 342)).